We begin with the raw amino-acid sequence, 2167 residues long: SH3 and multiple ankyrin repeat domains protein 1 (2167 aa).

Positions 1–63 (MTHSPATSED…TRGLQGRSMS (63 aa)) are disordered. Residues 17–32 (SECPEGGSESDSSPDG) are compositionally biased toward low complexity. Residues 33–47 (PGRGPQGTRGRGSGA) are compositionally biased toward gly residues. Arginine 43 carries the post-translational modification Omega-N-methylarginine. Phosphotyrosine is present on tyrosine 186. ANK repeat units lie at residues 212–242 (SGET…HIDF), 246–275 (DGMT…SPNY), 279–309 (RGLT…QLGI), 313–342 (NGWQ…EPGA), 346–375 (SGNT…NKDV), and 379–407 (NGQT…EQDV). Disordered stretches follow at residues 413-432 (SPKY…TVPP) and 454-546 (PGAS…SRGR). Over residues 454-479 (PGASSSGTPGPTSGSQGQSQPSAPST) the composition is skewed to low complexity. Over residues 527 to 542 (PAGGTGGSGGPGGSLG) the composition is skewed to gly residues. Residue serine 540 is modified to Phosphoserine. An Omega-N-methylarginine modification is found at arginine 544. Positions 554–613 (VPGRSFMAVKSYQAQGEGEISLSKGEKIKVLSIGEGGFWEGQVKGRVGWFPSDCLEEVAN) constitute an SH3 domain. The 95-residue stretch at 663–757 (TVLLQKKDSE…TLMVKVVMVT (95 aa)) folds into the PDZ domain. A phosphoserine mark is found at serine 671 and serine 791. Residues 841–894 (ISASESPGPGGLASLGKHRPKGFFATESSFDPHHRSQPSYDRPSFLPPGPGLML) are disordered. Serine 898 carries the phosphoserine modification. Disordered regions lie at residues 917-1233 (SRSL…LDFT) and 1245-1290 (RREG…RHSK). Over residues 928–947 (IPPPPTTSPPEPPYSTPPAP) the composition is skewed to pro residues. The residue at position 958 (arginine 958) is an Omega-N-methylarginine. Residues 969–980 (PLPASSPSSFDG) are compositionally biased toward low complexity. Over residues 1004 to 1028 (AHHHPPHHHHHHAPPPQPHHHHAHP) the composition is skewed to basic residues. Arginine 1059 carries the omega-N-methylarginine modification. A compositionally biased stretch (low complexity) spans 1064 to 1089 (SPTSGAPSPSHHSSSGGSSGPAQAPA). 2 positions are modified to omega-N-methylarginine: arginine 1098 and arginine 1109. 2 stretches are compositionally biased toward low complexity: residues 1132–1146 (SLPP…ALPR) and 1171–1184 (STSS…GSST). Residues 1203–1224 (SPAPATSPVPPSPSPVPTPASP) are compositionally biased toward pro residues. Positions 1245-1256 (RREGGWQNEARR) are enriched in basic and acidic residues. The residue at position 1257 (arginine 1257) is an Asymmetric dimethylarginine. Serine 1291 is modified (phosphoserine). Disordered stretches follow at residues 1308 to 1331 (GGSS…GSSS), 1361 to 1417 (LAAR…VLRL), 1429 to 1458 (RAGL…PPTA), 1500 to 1725 (FLEN…AGVA), 1740 to 1790 (GQAF…TPTS), 1828 to 1866 (VPPV…QPQA), 1898 to 1988 (PWAR…STRH), and 2002 to 2029 (RRAP…LPIL). A compositionally biased stretch (basic and acidic residues) spans 1363 to 1372 (ARERALKESS). Residues 1378-1395 (PQPPPRPPSPRYDAPPPT) show a composition bias toward pro residues. Residues 1396–1408 (LHHHSPHSPHSPH) show a composition bias toward basic residues. An Omega-N-methylarginine modification is found at arginine 1429. Serine 1442 bears the Phosphoserine mark. Residues 1530 to 1541 (RRVLPTSPTSPR) are compositionally biased toward low complexity. Over residues 1589–1615 (PLTPGPPHPLPDPPSPATPLPAAPPPA) the composition is skewed to pro residues. Over residues 1624-1641 (DSTASSLTSYDSEVATLT) the composition is skewed to polar residues. The span at 1648-1676 (PGDPPAPGPPAPAAPAPPAPQPGPDPPPG) shows a compositional bias: pro residues. Positions 1684-1694 (VDSRSSSDHPL) are enriched in basic and acidic residues. A compositionally biased stretch (low complexity) spans 1695–1708 (ETISSASTLSSLSA). Over residues 1709 to 1724 (EGGGNTGGVAGGGAGV) the composition is skewed to gly residues. Positions 1850-1861 (PGPPPPPLPGPL) are enriched in pro residues. Omega-N-methylarginine is present on arginine 1901. 3 stretches are compositionally biased toward low complexity: residues 1934-1945 (SQTSLLSKPSSS), 1960-1985 (TGSG…ASAS), and 2002-2012 (RRAPSPSLLPA). Residues arginine 2022, arginine 2042, and arginine 2080 each carry the omega-N-methylarginine modification. The 64-residue stretch at 2104–2167 (WTKFDVADWL…DRALKFFLER (64 aa)) folds into the SAM domain.

The protein belongs to the SHANK family. As to quaternary structure, may homomultimerize via its SAM domain. Interacts with the C-terminus of SSTR2 via the PDZ domain. Interacts with SHARPIN, SPTAN1, HOMER1 and DLGAP1/GKAP. Part of a complex with DLG4/PSD-95 and DLGAP1/GKAP. Interacts with BAIAP2. Interacts with IGSF9. Interacts with HOMER1 and HOMER3. As to expression, in brain, highly expressed in cortex, hippocampus and cerebellum.

The protein localises to the cytoplasm. The protein resides in the synapse. It localises to the postsynaptic density. Functionally, seems to be an adapter protein in the postsynaptic density (PSD) of excitatory synapses that interconnects receptors of the postsynaptic membrane including NMDA-type and metabotropic glutamate receptors, and the actin-based cytoskeleton. Plays a role in the structural and functional organization of the dendritic spine and synaptic junction. Overexpression promotes maturation of dendritic spines and the enlargement of spine heads via its ability to recruit Homer to postsynaptic sites, and enhances presynaptic function. The sequence is that of SH3 and multiple ankyrin repeat domains protein 1 (Shank1) from Mus musculus (Mouse).